The primary structure comprises 61 residues: Small ribosomal subunit protein uS14 (61 aa).

Positions 24, 27, 40, and 43 each coordinate Zn(2+).

This sequence belongs to the universal ribosomal protein uS14 family. Zinc-binding uS14 subfamily. In terms of assembly, part of the 30S ribosomal subunit. Contacts proteins S3 and S10. It depends on Zn(2+) as a cofactor.

Its function is as follows. Binds 16S rRNA, required for the assembly of 30S particles and may also be responsible for determining the conformation of the 16S rRNA at the A site. The protein is Small ribosomal subunit protein uS14 of Clostridium beijerinckii (strain ATCC 51743 / NCIMB 8052) (Clostridium acetobutylicum).